The primary structure comprises 282 residues: NADPH-dependent 7-cyano-7-deazaguanine reductase (282 aa).

88–90 (IES) is a binding site for substrate. 90 to 91 (SK) serves as a coordination point for NADPH. The active-site Thioimide intermediate is Cys190. Asp197 serves as the catalytic Proton donor. Position 229-230 (229-230 (HE)) interacts with substrate. An NADPH-binding site is contributed by 258–259 (RG).

Belongs to the GTP cyclohydrolase I family. QueF type 2 subfamily. Homodimer.

The protein localises to the cytoplasm. The catalysed reaction is 7-aminomethyl-7-carbaguanine + 2 NADP(+) = 7-cyano-7-deazaguanine + 2 NADPH + 3 H(+). The protein operates within tRNA modification; tRNA-queuosine biosynthesis. Catalyzes the NADPH-dependent reduction of 7-cyano-7-deazaguanine (preQ0) to 7-aminomethyl-7-deazaguanine (preQ1). The chain is NADPH-dependent 7-cyano-7-deazaguanine reductase from Escherichia coli (strain UTI89 / UPEC).